The following is a 276-amino-acid chain: Undecaprenyl-diphosphatase (276 aa).

The next 5 membrane-spanning stretches (helical) occupy residues 84–104, 115–135, 188–208, 222–242, and 250–270; these read YRLG…GLFF, LWVV…AEYV, FGFL…LPDA, QLLV…AWLL, and MYWF…LLAT.

It belongs to the UppP family.

It is found in the cell membrane. The enzyme catalyses di-trans,octa-cis-undecaprenyl diphosphate + H2O = di-trans,octa-cis-undecaprenyl phosphate + phosphate + H(+). In terms of biological role, catalyzes the dephosphorylation of undecaprenyl diphosphate (UPP). Confers resistance to bacitracin. This chain is Undecaprenyl-diphosphatase, found in Mycobacterium bovis (strain ATCC BAA-935 / AF2122/97).